A 577-amino-acid polypeptide reads, in one-letter code: MSTLPISSVSFSSSTSPLVVDDKVSTKPDVIRHTMNFNASIWGDQFLTYDEPEDLVMKKQLVEELKEEVKKELITIKGSNEPMQHVKLIELIDAVQRLGIAYHFEEEIEEALQHIHVTYGEQWVDKENLQSISLWFRLLRQQGFNVSSGVFKDFMDEKGKFKESLCNDAQGILALYEAAFMRVEDETILDNALEFTKVHLDIIAKDPSCDSSLRTQIHQALKQPLRRRLARIEALHYMPIYQQETSHNEDLLKLAKLDFSVLQSMHKKELSHICKWWKDLDLQNKLPYVRDRVVEGYFWILSIYYEPQHARTRMFLMKTCMWLVVLDDTFDNYGTYEELEIFTQAVERWSISCLDMLPEYMKLIYQELVNLHVEMEESLGKGGKNISNSLCQGRWQKELGSQITLVETKMAKRGVHAQPLEEYMSVSMVTGTYGLMIARSYVGRGDIVTEDTFKWVSSYPPIIKASCVIVRLMDDIVSHKEEQERGHVASSIECYSKESGASEEEACEYISRKVEDAWKVINRESLRPTAVPFPLLMPAINLARMCEVLYSVNDGFTHAEGDMKSYMKSFFVHPMVV.

Mg(2+) is bound by residues Asp-327, Asp-331, Asp-474, Ser-478, and Glu-482. The DDXXD motif motif lies at 327–331 (DDTFD).

Belongs to the terpene synthase family. It depends on Mg(2+) as a cofactor. The cofactor is Co(2+). Requires Mn(2+) as cofactor. As to expression, expressed in flowers.

Its subcellular location is the cytoplasm. The enzyme catalyses (2E,6E)-farnesyl diphosphate = (E)-beta-farnesene + diphosphate. The protein operates within secondary metabolite biosynthesis; terpenoid biosynthesis. Its activity is regulated as follows. Strongly inhibited by manganese at concentration higher than 20 uM. Functionally, sesquiterpene cyclase catalyzing the production of beta-farnesene from farnesyl diphosphate. Unable to use geranyl diphosphate as substrate. This Artemisia annua (Sweet wormwood) protein is (E)-beta-farnesene synthase (CASC125).